A 535-amino-acid chain; its full sequence is MAGTADCQEHVARPRRPNICRVLRRTGYGKCLICSLLLVLCFFYATYCHVKHEAYSGSQPLLIYQHGPCAQGYNFVPIVFGLMLYIVYLMECWHSRTKIINMKKVRVEDALDYITALRTSPPIVWWKSVCYHYTRKTRQVTRYRNGDAVSATQVYYERVNSHQAGSMFIYDTCGFRDISKSILEVEKFHVTRIRLTRSFVFANMQAATEFEQQRSRFFNDNETKDDYMEVREGMDLSDVGFVEEILAFNCPTPPWFLHPIVFWFFSILVLSWPLRIYTEWRTAVLSFQVVKLFGTHYLSPNSINYTGPLTRTSTMDTVELEALLRREQHFVVPSYSEVMLMQNTIANSNTNFPNLRFLEPVIQPRPLVNTTNEHIVLRNYGATDTENSEQSSTVIPRPPPLRVSRSMTFAEENNDENLGFLENGNRRNRAIPSRGTVPLRSLSIGGISAWSNGYREIGREDSQFLIEPDEPPPPYEVALRMCAPLYERLRRSISSRLASISHSSSKDLKSLTLKNNNGAANNNNNNNNENPEEQP.

Helical transmembrane passes span 27-47 (GYGK…YATY), 73-93 (YNFV…MECW), and 254-274 (PWFL…SWPL). Residues 498-535 (ASISHSSSKDLKSLTLKNNNGAANNNNNNNNENPEEQP) form a disordered region. A compositionally biased stretch (low complexity) spans 510–529 (SLTLKNNNGAANNNNNNNNE).

It belongs to the TMEM151 family.

The protein resides in the membrane. This is Transmembrane protein 151 homolog from Caenorhabditis briggsae.